The chain runs to 237 residues: Casparian strip membrane protein 2 (237 aa).

Residues 1-48 form a disordered region; the sequence is MSGSDTSGSVHVDEHGHGHGKASSSYDGAGAPAPAPAPFQGHRKAGSG. Residues 1–69 are Cytoplasmic-facing; the sequence is MSGSDTSGSV…GSGGDGLRRC (69 aa). Residues 70–90 traverse the membrane as a helical segment; sequence LGLIDFVLRVAAFGPTLAAAI. The Extracellular segment spans residues 91–117; sequence SIGTSDERLSVFTNYFQFRARFDDFPA. Residues 118–138 form a helical membrane-spanning segment; sequence FEFFIVANAIAAGYMVLSLPF. The Cytoplasmic portion of the chain corresponds to 139–152; sequence SAATIMSSKATGVK. Residues 153–173 traverse the membrane as a helical segment; the sequence is LLLLICDTIMVGLLTAAASAA. Residues 174 to 205 lie on the Extracellular side of the membrane; it reads AAMVYVAHEGNLRANWVPICLQFHGFCQRTSG. Residues 206–226 traverse the membrane as a helical segment; it reads AVIASFLAVFVLMVLIVMAAF. Topologically, residues 227-237 are cytoplasmic; it reads TMPRRTHHTAS.

The protein belongs to the Casparian strip membrane proteins (CASP) family. Homodimer and heterodimers.

It is found in the cell membrane. Regulates membrane-cell wall junctions and localized cell wall deposition. Required for establishment of the Casparian strip membrane domain (CSD) and the subsequent formation of Casparian strips, a cell wall modification of the root endodermis that determines an apoplastic barrier between the intraorganismal apoplasm and the extraorganismal apoplasm and prevents lateral diffusion. This chain is Casparian strip membrane protein 2, found in Oryza sativa subsp. japonica (Rice).